Here is a 206-residue protein sequence, read N- to C-terminus: Acidic proline-rich protein PRP33 (206 aa).

The first 13 residues, 1 to 13 (MLVVLLTAALLVL), serve as a signal peptide directing secretion. Residues 15–206 (SAHGSDEEVI…EQPSYLWFSS (192 aa)) are disordered. The span at 55–71 (ENGDGDDSDDGDDDGSG) shows a compositional bias: acidic residues. 6 tandem repeats follow at residues 80-97 (PPPH…HHHG), 98-115 (PPPS…NPQG), 116-133 (PPPQ…NPQG), 134-152 (PPPQ…KPQG), 153-170 (PPPQ…NPQG), and 171-189 (PPPQ…KPQD). A 6 X 18 AA approximate tandem repeats region spans residues 80–189 (PPPHGGNHQR…RPPQPRKPQD (110 aa)). The span at 103–112 (GPQTSSQPGN) shows a compositional bias: low complexity. A compositionally biased stretch (pro residues) spans 113-174 (PQGPPPQGGP…PGNPQGPPPQ (62 aa)).

The protein resides in the secreted. Its function is as follows. May protect teeth by binding to tannins. The polypeptide is Acidic proline-rich protein PRP33 (Prpg1) (Rattus norvegicus (Rat)).